Consider the following 162-residue polypeptide: Transcriptional repressor NrdR (162 aa).

Residues 1–21 (MNCPDCGNGRTRVIDTGASSD) form a disordered region. Residues 3 to 34 (CPDCGNGRTRVIDTGASSDGASVRRRRECQRC) fold into a zinc finger. The region spanning 49 to 139 (LQVKKRDGTI…VYKAFSEPQE (91 aa)) is the ATP-cone domain.

This sequence belongs to the NrdR family. Zn(2+) is required as a cofactor.

Functionally, negatively regulates transcription of bacterial ribonucleotide reductase nrd genes and operons by binding to NrdR-boxes. In Natronomonas pharaonis (strain ATCC 35678 / DSM 2160 / CIP 103997 / JCM 8858 / NBRC 14720 / NCIMB 2260 / Gabara) (Halobacterium pharaonis), this protein is Transcriptional repressor NrdR.